We begin with the raw amino-acid sequence, 288 residues long: Bifunctional protein FolD (288 aa).

Residues Gly166–Ser168 and Ile232 each bind NADP(+).

The protein belongs to the tetrahydrofolate dehydrogenase/cyclohydrolase family. In terms of assembly, homodimer.

The enzyme catalyses (6R)-5,10-methylene-5,6,7,8-tetrahydrofolate + NADP(+) = (6R)-5,10-methenyltetrahydrofolate + NADPH. It catalyses the reaction (6R)-5,10-methenyltetrahydrofolate + H2O = (6R)-10-formyltetrahydrofolate + H(+). It functions in the pathway one-carbon metabolism; tetrahydrofolate interconversion. In terms of biological role, catalyzes the oxidation of 5,10-methylenetetrahydrofolate to 5,10-methenyltetrahydrofolate and then the hydrolysis of 5,10-methenyltetrahydrofolate to 10-formyltetrahydrofolate. This Citrobacter koseri (strain ATCC BAA-895 / CDC 4225-83 / SGSC4696) protein is Bifunctional protein FolD.